A 457-amino-acid polypeptide reads, in one-letter code: tRNA modification GTPase MnmE (457 aa).

The (6S)-5-formyl-5,6,7,8-tetrahydrofolate site is built by R22, E86, and R125. Residues 221 to 381 (GLRAVLAGRP…LEAEVARVAG (161 aa)) enclose the TrmE-type G domain. Position 231 (N231) interacts with K(+). Residues 231-236 (NVGKSS), 250-256 (TPIPGTT), and 275-278 (DTAG) each bind GTP. Mg(2+) is bound at residue S235. 3 residues coordinate K(+): T250, I252, and T255. T256 contributes to the Mg(2+) binding site. K457 provides a ligand contact to (6S)-5-formyl-5,6,7,8-tetrahydrofolate.

It belongs to the TRAFAC class TrmE-Era-EngA-EngB-Septin-like GTPase superfamily. TrmE GTPase family. As to quaternary structure, homodimer. Heterotetramer of two MnmE and two MnmG subunits. The cofactor is K(+).

The protein resides in the cytoplasm. In terms of biological role, exhibits a very high intrinsic GTPase hydrolysis rate. Involved in the addition of a carboxymethylaminomethyl (cmnm) group at the wobble position (U34) of certain tRNAs, forming tRNA-cmnm(5)s(2)U34. The protein is tRNA modification GTPase MnmE of Symbiobacterium thermophilum (strain DSM 24528 / JCM 14929 / IAM 14863 / T).